The following is a 98-amino-acid chain: NADH-ubiquinone oxidoreductase chain 4L (98 aa).

3 consecutive transmembrane segments (helical) span residues 2 to 22 (TLVM…TLMF), 26 to 46 (LMST…MAVI), and 61 to 81 (IIIL…LAMV).

The protein belongs to the complex I subunit 4L family. Core subunit of respiratory chain NADH dehydrogenase (Complex I) which is composed of 45 different subunits.

It is found in the mitochondrion inner membrane. It carries out the reaction a ubiquinone + NADH + 5 H(+)(in) = a ubiquinol + NAD(+) + 4 H(+)(out). In terms of biological role, core subunit of the mitochondrial membrane respiratory chain NADH dehydrogenase (Complex I) which catalyzes electron transfer from NADH through the respiratory chain, using ubiquinone as an electron acceptor. Part of the enzyme membrane arm which is embedded in the lipid bilayer and involved in proton translocation. The sequence is that of NADH-ubiquinone oxidoreductase chain 4L (MT-ND4L) from Nyctomys sumichrasti (Sumichrast's vesper rat).